The chain runs to 297 residues: Homoserine kinase (297 aa).

An ATP-binding site is contributed by 82–92 (PVSRGLGSSAA).

The protein belongs to the GHMP kinase family. Homoserine kinase subfamily.

It localises to the cytoplasm. It carries out the reaction L-homoserine + ATP = O-phospho-L-homoserine + ADP + H(+). It participates in amino-acid biosynthesis; L-threonine biosynthesis; L-threonine from L-aspartate: step 4/5. In terms of biological role, catalyzes the ATP-dependent phosphorylation of L-homoserine to L-homoserine phosphate. The protein is Homoserine kinase of Clostridium botulinum (strain Kyoto / Type A2).